A 125-amino-acid chain; its full sequence is Succinate dehydrogenase assembly factor 3, mitochondrial (125 aa).

The transit peptide at 1-30 (MTGRHVSRVRSLYRRILQLHRALPPDLKAL) directs the protein to the mitochondrion.

This sequence belongs to the complex I LYR family. SDHAF3 subfamily. Interacts with Sdhb within an Sdha-Sdhb subcomplex.

It localises to the mitochondrion matrix. In terms of biological role, plays an essential role in the assembly of succinate dehydrogenase (SDH), an enzyme complex (also referred to as respiratory complex II) that is a component of both the tricarboxylic acid (TCA) cycle and the mitochondrial electron transport chain, and which couples the oxidation of succinate to fumarate with the reduction of ubiquinone (coenzyme Q) to ubiquinol. Promotes maturation of the iron-sulfur protein subunit Sdhb of the SDH catalytic dimer, protecting it from the deleterious effects of oxidants. May act together with SDHAF1. This is Succinate dehydrogenase assembly factor 3, mitochondrial from Rattus norvegicus (Rat).